Consider the following 72-residue polypeptide: uncharacterized protein (72 aa).

The tract at residues 15–62 is disordered; sequence NNNYNNNNNNNNNNNNNNNNNNNNNNNNNNININNNNNNNNNNNNNNN.

This is an uncharacterized protein from Dictyostelium discoideum (Social amoeba).